A 3649-amino-acid chain; its full sequence is N-(5-amino-5-carboxypentanoyl)-L-cysteinyl-D-valine synthase (3649 aa).

The interval 401–861 is domain 1 (adipate-activating); that stretch reads SRDRAYVTYT…LAGHLESQGH (461 aa). Carrier domains are found at residues 783–860, 1859–1936, and 2909–2984; these read APLL…ESQG, APVS…QAAA, and APRD…LSGL. O-(pantetheine 4'-phosphoryl)serine occurs at positions 820, 1896, and 2944. Residues 1014–1937 form a domain 2 (cysteine-activating) region; sequence HHIILDGWSL…QAEHIQAAAL (924 aa). Positions 2079–2985 are domain 3 (valine-activating); it reads HHSCFDGWSW…FVDNVLSGLA (907 aa). The active-site For thioesterase activity is S3502.

Belongs to the ATP-dependent AMP-binding enzyme family. Pantetheine 4'-phosphate is required as a cofactor.

It catalyses the reaction L-2-aminoadipate + L-valine + L-cysteine + 3 ATP + H2O = N-[(5S)-5-amino-5-carboxypentanoyl]-L-cysteinyl-D-valine + 3 AMP + 3 diphosphate + 3 H(+). It functions in the pathway antibiotic biosynthesis; penicillin G biosynthesis; penicillin G from L-alpha-aminoadipate and L-cysteine and L-valine: step 1/3. In terms of biological role, each of the constituent amino acids of the tripeptide acv are activated as aminoacyl-adenylates with peptide bonds formed through the participation of amino acid thioester intermediates. The sequence is that of N-(5-amino-5-carboxypentanoyl)-L-cysteinyl-D-valine synthase (pcbAB) from Amycolatopsis lactamdurans (Nocardia lactamdurans).